An 89-amino-acid chain; its full sequence is Phytosulfokines 1 (89 aa).

The N-terminal stretch at 1 to 22 is a signal peptide; that stretch reads MVNPGRTARALCLLCLALLLLG. Positions 23-79 are excised as a propeptide; the sequence is QDTHSRKLLLQEKHSHGVGNGTTTTQEPSRENGGSTGSNNNGQLQFDSAKWEEFHTD. The segment at 33–70 is disordered; the sequence is QEKHSHGVGNGTTTTQEPSRENGGSTGSNNNGQLQFDS. N-linked (GlcNAc...) asparagine glycosylation is present at asparagine 42. 2 positions are modified to sulfotyrosine: tyrosine 80 and tyrosine 82. Positions 85 to 89 are excised as a propeptide; it reads DVKKP.

It belongs to the phytosulfokine family. In terms of processing, sulfation is important for activity and for the binding to a putative membrane receptor. Post-translationally, PSK-alpha is produced by endopeptidase digestion. PSK-beta is produced from PSK-alpha by exopeptidase digestion. As to expression, expressed throughout the seedling. More abundant in fragments containing shoot or root apexes where cells proliferate vigorously.

The protein resides in the secreted. In terms of biological role, promotes plant cell differentiation, organogenesis and somatic embryogenesis as well as cell proliferation. The chain is Phytosulfokines 1 (PSK1) from Oryza sativa subsp. japonica (Rice).